The primary structure comprises 597 residues: tRNA uridine 5-carboxymethylaminomethyl modification enzyme MnmG (597 aa).

11-16 (GAGHAG) is a binding site for FAD. An NAD(+)-binding site is contributed by 275 to 289 (SPRYCPSIEEKIERY).

This sequence belongs to the MnmG family. Homodimer. Heterotetramer of two MnmE and two MnmG subunits. FAD serves as cofactor.

The protein resides in the cytoplasm. In terms of biological role, NAD-binding protein involved in the addition of a carboxymethylaminomethyl (cmnm) group at the wobble position (U34) of certain tRNAs, forming tRNA-cmnm(5)s(2)U34. The protein is tRNA uridine 5-carboxymethylaminomethyl modification enzyme MnmG of Endomicrobium trichonymphae.